The sequence spans 335 residues: Serpentine receptor class alpha-13 (335 aa).

The Extracellular portion of the chain corresponds to 1-22; that stretch reads MAIVSSENRTCADEKLLALYQS. A helical transmembrane segment spans residues 23-43; the sequence is WSYIASIVFNCLVPTISTYFL. At 44 to 61 the chain is on the cytoplasmic side; it reads GRAIFQLCNQATIQYSTR. A helical transmembrane segment spans residues 62–82; that stretch reads ILLIATILFAACHQVSYFAFK. Residues 83-107 are Extracellular-facing; sequence IDLLHTMFFKLDQPCFLQRSSYDCR. Residues 108-128 traverse the membrane as a helical segment; that stretch reads FISIAQTTGVVGMALTGLAMS. Residues 129 to 149 lie on the Cytoplasmic side of the membrane; the sequence is TDRALALTFPADYHKLKSVPR. A helical transmembrane segment spans residues 150–170; it reads VVLSVFVFIVSFSTWFLLTMN. Residues 171–192 are Extracellular-facing; sequence DPLTGYLNHCGFYPSYSVANFQ. Residues 193 to 213 traverse the membrane as a helical segment; the sequence is LMLDVILYLAIFNLIWDVILF. The Cytoplasmic segment spans residues 214–235; that stretch reads YYARQQILWRRSYQFQKRYEAR. Residues 236–255 form a helical membrane-spanning segment; that stretch reads ISLNCTQAVFVISICQCISN. The Extracellular segment spans residues 256–278; it reads GANSGLMRLLMMIGTSITSVTYS. The chain crosses the membrane as a helical span at residues 279-299; the sequence is SLLSLFYTAPYSCILLPILMM. Topologically, residues 300 to 335 are cytoplasmic; that stretch reads RISEYIREQRTIGILSLRSEKPGLEEHHQRMRAAWS.

It belongs to the nematode receptor-like protein sra family.

It localises to the membrane. Chemosensory receptor that negatively regulates RAS/MAPK signaling during vulva induction and the negative regulation of olfaction of volitile attractants. Required for the suppression of vulval induction in response to food starvation. Signaling acts through the GPA-5 G-alpha protein subunit. This chain is Serpentine receptor class alpha-13, found in Caenorhabditis briggsae.